The following is a 666-amino-acid chain: Probable potassium transport system protein Kup (666 aa).

The next 12 helical transmembrane spans lie at 16–36, 58–78, 100–120, 141–161, 165–185, 221–241, 253–273, 292–312, 343–363, 373–393, 399–419, and 424–444; these read GFII…LYTM, ISLI…LIAL, PWLI…GALT, IYQN…VLFG, FGTG…FSFL, IFIL…YSDL, WPFV…WILA, LTVY…QALI, LYIP…VLYF, YGLA…YYLI, PFLA…FFWA, and FMHG…VMFI.

This sequence belongs to the HAK/KUP transporter (TC 2.A.72) family.

Its subcellular location is the cell membrane. It carries out the reaction K(+)(in) + H(+)(in) = K(+)(out) + H(+)(out). Its function is as follows. Transport of potassium into the cell. Likely operates as a K(+):H(+) symporter. This is Probable potassium transport system protein Kup from Streptococcus pyogenes serotype M5 (strain Manfredo).